A 450-amino-acid polypeptide reads, in one-letter code: Interferon regulatory factor 4 (450 aa).

The IRF tryptophan pentad repeat DNA-binding region spans 21-129 (NGKLRQWLID…DPYKVYRIVP (109 aa)). 2 positions are modified to phosphoserine; by ROCK2: Ser446 and Ser447.

It belongs to the IRF family. Interacts with SPIB and DEF6. Interacts with the BATF-JUNB heterodimer. Interacts with BATF (via bZIP domain); the interaction is direct. Directly interacts with NLRP3 in the nucleus of Th2 cells; this interaction enhances IRF4 ability to bind to the IL4 promoter and is required for optimal IRF4-dependent IL4 transcription. Interacts with SPI1. Phosphorylation by ROCK2 regulates IL-17 and IL-21 production. As to expression, lymphoid cells.

Its subcellular location is the nucleus. The protein localises to the cytoplasm. In terms of biological role, transcriptional activator. Binds to the interferon-stimulated response element (ISRE) of the MHC class I promoter. Binds the immunoglobulin lambda light chain enhancer, together with PU.1. Probably plays a role in ISRE-targeted signal transduction mechanisms specific to lymphoid cells. Involved in CD8(+) dendritic cell differentiation by forming a complex with the BATF-JUNB heterodimer in immune cells, leading to recognition of AICE sequence (5'-TGAnTCA/GAAA-3'), an immune-specific regulatory element, followed by cooperative binding of BATF and IRF4 and activation of genes. The sequence is that of Interferon regulatory factor 4 from Mus musculus (Mouse).